The chain runs to 336 residues: Holliday junction branch migration complex subunit RuvB (336 aa).

A large ATPase domain (RuvB-L) region spans residues 4–184; that stretch reads ADRLIQPQVQ…FGIPLRLEFY (181 aa). ATP contacts are provided by residues R24, G65, K68, T69, T70, 131–133, R174, Y184, and R221; that span reads EDY. T69 lines the Mg(2+) pocket. The small ATPAse domain (RuvB-S) stretch occupies residues 185–255; that stretch reads NVADLTTIVT…VAEYALDLLD (71 aa). A head domain (RuvB-H) region spans residues 258–336; sequence DQGFDYLDRK…HFSLVRPEKA (79 aa). DNA is bound by residues R294, R313, and R318.

It belongs to the RuvB family. Homohexamer. Forms an RuvA(8)-RuvB(12)-Holliday junction (HJ) complex. HJ DNA is sandwiched between 2 RuvA tetramers; dsDNA enters through RuvA and exits via RuvB. An RuvB hexamer assembles on each DNA strand where it exits the tetramer. Each RuvB hexamer is contacted by two RuvA subunits (via domain III) on 2 adjacent RuvB subunits; this complex drives branch migration. In the full resolvosome a probable DNA-RuvA(4)-RuvB(12)-RuvC(2) complex forms which resolves the HJ.

The protein localises to the cytoplasm. The enzyme catalyses ATP + H2O = ADP + phosphate + H(+). Its function is as follows. The RuvA-RuvB-RuvC complex processes Holliday junction (HJ) DNA during genetic recombination and DNA repair, while the RuvA-RuvB complex plays an important role in the rescue of blocked DNA replication forks via replication fork reversal (RFR). RuvA specifically binds to HJ cruciform DNA, conferring on it an open structure. The RuvB hexamer acts as an ATP-dependent pump, pulling dsDNA into and through the RuvAB complex. RuvB forms 2 homohexamers on either side of HJ DNA bound by 1 or 2 RuvA tetramers; 4 subunits per hexamer contact DNA at a time. Coordinated motions by a converter formed by DNA-disengaged RuvB subunits stimulates ATP hydrolysis and nucleotide exchange. Immobilization of the converter enables RuvB to convert the ATP-contained energy into a lever motion, pulling 2 nucleotides of DNA out of the RuvA tetramer per ATP hydrolyzed, thus driving DNA branch migration. The RuvB motors rotate together with the DNA substrate, which together with the progressing nucleotide cycle form the mechanistic basis for DNA recombination by continuous HJ branch migration. Branch migration allows RuvC to scan DNA until it finds its consensus sequence, where it cleaves and resolves cruciform DNA. The chain is Holliday junction branch migration complex subunit RuvB from Shewanella frigidimarina (strain NCIMB 400).